A 536-amino-acid chain; its full sequence is Pre-mRNA-splicing factor SLU7 (536 aa).

Residues 22–42 are disordered; that stretch reads EARKAGLAPAEVDEDGKEINP. The segment at 94–111 adopts a CCHC-type zinc-finger fold; that stretch reads GACENCGAMTHDKKSCME. The interval 178-201 is disordered; that stretch reads KLEEKDGEEGDENVASEEEDEEDG. Positions 182–200 are enriched in acidic residues; that stretch reads KDGEEGDENVASEEEDEED.

The protein belongs to the SLU7 family.

It is found in the nucleus. Participates in the second catalytic step of pre-mRNA splicing, when the free hydroxyl group of exon I attacks the 3'-splice site to generate spliced mRNA and the excised lariat intron. This chain is Pre-mRNA-splicing factor SLU7, found in Oryza sativa subsp. indica (Rice).